The primary structure comprises 599 residues: Glucose-6-phosphate 1-dehydrogenase 3, chloroplastic (599 aa).

The segment covering 1 to 18 (MSSLSCPTYRSRTSSSSP) has biased composition (low complexity). Residues 1–23 (MSSLSCPTYRSRTSSSSPFLSNH) are disordered. The N-terminal 66 residues, 1-66 (MSSLSCPTYR…RSQRRSVQSS (66 aa)), are a transit peptide targeting the chloroplast. Val67 carries the post-translational modification N-acetylvaline. NADP(+) is bound by residues 119-126 (GASGDLAK) and Arg153. Cysteines 171 and 179 form a disulfide. Lys256 is a binding site for NADP(+). D-glucose 6-phosphate contacts are provided by residues Lys256, 286–290 (HYLGK), Glu324, and Asp343. His348 (proton acceptor) is an active-site residue. Lys441 lines the NADP(+) pocket. Positions 444 and 449 each coordinate D-glucose 6-phosphate. NADP(+) contacts are provided by Arg454 and Arg483. Gln485 is a binding site for D-glucose 6-phosphate. NADP(+) contacts are provided by residues 491–493 (YLK) and Arg576.

The protein belongs to the glucose-6-phosphate dehydrogenase family. As to quaternary structure, forms homodimer. Interacts with G6PD1. In terms of tissue distribution, expressed in roots, flowers and siliques.

The protein resides in the plastid. It is found in the chloroplast stroma. The enzyme catalyses D-glucose 6-phosphate + NADP(+) = 6-phospho-D-glucono-1,5-lactone + NADPH + H(+). Its pathway is carbohydrate degradation; pentose phosphate pathway; D-ribulose 5-phosphate from D-glucose 6-phosphate (oxidative stage): step 1/3. With respect to regulation, regulated by metabolites. Post-translationally inactivated by cysteine-mediated redox modification via the ferredoxin-thioredoxin system in the light and this avoids futile cycles with photosynthetic CO2 fixation. Functionally, catalyzes the rate-limiting step of the oxidative pentose-phosphate pathway, which represents a route for the dissimilation of carbohydrates besides glycolysis. The main function of this enzyme is to provide reducing power (NADPH) and pentose phosphates for fatty acid and nucleic acid synthesis which are involved in membrane synthesis and cell division. This chain is Glucose-6-phosphate 1-dehydrogenase 3, chloroplastic, found in Arabidopsis thaliana (Mouse-ear cress).